Here is a 462-residue protein sequence, read N- to C-terminus: Zinc transporter zipt-7.2 (462 aa).

A helical transmembrane segment spans residues L2–L22. The segment at H39–A134 is disordered. The segment covering H40–G51 has biased composition (basic residues). The span at A65–A74 shows a compositional bias: low complexity. Over residues A75–H94 the composition is skewed to basic and acidic residues. A compositionally biased stretch (basic residues) spans H111–H120. Positions S121–E132 are enriched in basic and acidic residues. Residues A161 to I181 traverse the membrane as a helical segment. N184 is a glycosylation site (N-linked (GlcNAc...) asparagine). Residues V194–H214 form a helical membrane-spanning segment. Positions G219–H239 are disordered. A helical membrane pass occupies residues M244–V264. The interval E270 to D307 is disordered. The span at H281–D307 shows a compositional bias: basic and acidic residues. Residue N326 is glycosylated (N-linked (GlcNAc...) asparagine). Transmembrane regions (helical) follow at residues I333–V353, A376–F396, and S410–P430. N-linked (GlcNAc...) asparagine glycosylation is present at N435. A helical membrane pass occupies residues T441–Y461.

This sequence belongs to the ZIP transporter (TC 2.A.5) family. KE4/Catsup subfamily. In terms of tissue distribution, expressed in somatic tissues.

Its subcellular location is the membrane. Functionally, zinc transporter. In Caenorhabditis elegans, this protein is Zinc transporter zipt-7.2.